We begin with the raw amino-acid sequence, 264 residues long: MKIEAVIFDWAGTTVDYGCFAPLEVFMEIFHKRGVGITAEEARKPMGLLKIDHVRALTEMPRIANEWNRIFGKLPTETDIQEMYEEFEEILFAILPRYASPIHGVKEVIASLRERGIKIGSTTGYTREMMDIVAKEAALQGYKPDFLVTPDDVPAGRPYPWMCYKNAMELGVYPMNHMIKIGDTVSDMKEGRNAGMWTVGVILGSSELGLSEEEVENMDPAELREKIEVVRNRFVENGAHFTIETMQELESVMERIEKQELIIS.

The Nucleophile role is filled by Asp-9. Positions 9 and 11 each coordinate Mg(2+). Lys-50 serves as the catalytic Schiff-base intermediate with substrate. Asp-183 is a Mg(2+) binding site.

The protein belongs to the HAD-like hydrolase superfamily. PhnX family. Homodimer. Requires Mg(2+) as cofactor.

It catalyses the reaction phosphonoacetaldehyde + H2O = acetaldehyde + phosphate + H(+). Functionally, involved in phosphonate degradation. This is Phosphonoacetaldehyde hydrolase from Bacillus cereus (strain ZK / E33L).